Consider the following 139-residue polypeptide: Large ribosomal subunit protein uL14 (139 aa).

Belongs to the universal ribosomal protein uL14 family.

In Syntrichia ruralis (Great hairy screw-moss), this protein is Large ribosomal subunit protein uL14 (RPL23).